Here is a 148-residue protein sequence, read N- to C-terminus: MEQALKQARLAFDKNEVPVGVVIVYRLNQKIIVSSHNNIEEKNNALCHAEIIAINEACNLISSKNLNDYDIYVTLEPCAMCASAISHSRLKRLFYGASDSKQGAVESNLRYFNSSACFHRPEIYSGILSEHSRFLMKEFFQKMRSTID.

One can recognise a CMP/dCMP-type deaminase domain in the interval Met-1–Ala-116. His-48 is a Zn(2+) binding site. The Proton donor role is filled by Glu-50. Residues Cys-78 and Cys-81 each contribute to the Zn(2+) site.

Belongs to the cytidine and deoxycytidylate deaminase family. In terms of assembly, homodimer. Zn(2+) serves as cofactor.

The catalysed reaction is adenosine(34) in tRNA + H2O + H(+) = inosine(34) in tRNA + NH4(+). In terms of biological role, catalyzes the deamination of adenosine to inosine at the wobble position 34 of tRNA(Arg2). In Rickettsia typhi (strain ATCC VR-144 / Wilmington), this protein is tRNA-specific adenosine deaminase.